Consider the following 315-residue polypeptide: Eukaryotic translation initiation factor 2 subunit 1 (315 aa).

The S1 motif domain occupies 17 to 88 (EDVVMVNVRS…EKGYIDLSKR (72 aa)). Position 49 is a phosphoserine; by HRI (serine 49). At serine 52 the chain carries Phosphoserine. An N6-acetyllysine modification is found at lysine 141. The residue at position 158 (serine 158) is a Phosphoserine. Phosphothreonine is present on residues threonine 279 and threonine 281. The tract at residues 293 to 315 (LERENAEVDGDDDAEEMEAKAED) is disordered. The segment covering 299–308 (EVDGDDDAEE) has biased composition (acidic residues).

Belongs to the eIF-2-alpha family. Eukaryotic translation initiation factor 2 eIF2 is a heterotrimeric complex composed of an alpha (EIF2S1), a beta (EIF2S2) and a gamma (EIF2S3) chain. eIF2 is member of the 43S pre-initiation complex (43S PIC). eIF2 forms a complex with at least CELF1/CUGBP1, CALR, CALR3, EIF2S1, EIF2S2, HSP90B1 and HSPA5. Interaction with METAP2 protects EIF2S1 from inhibitory phosphorylation. Interacts with ABCF1 isoform 2. Associates with ribosomes. Interacts with DDX3X in an RNA-independent manner. Interacts with CDC123. In terms of assembly, (Microbial infection) Interacts with rotavirus A non-structural protein 2; this interaction probably plays a role in the sequestration of IF2A in viral factories. Interacts with rotavirus A non-structural protein 5; this interaction probably plays a role in its sequestration in viral factories. Post-translationally, phosphorylation at Ser-49 and Ser-52 stabilizes the eIF-2/GDP/eIF2B complex and prevents GDP/GTP exchange reaction, thus impairing the recycling of eIF-2 between successive rounds of initiation and leading to global inhibition of translation, while concomitantly initiating the preferential translation of integrated stress response (ISR)-specific mRNAs. Substrate for at least 4 kinases: EIF2AK1/HRI, EIF2AK2/PKR, EIF2AK3/PERK and EIF2AK4/GCN2. Phosphorylation on Ser-52 by the EIF2AK4/GCN2 protein kinase occurs in response to amino acid starvation and UV irradiation. Phosphorylation at Ser-52 by the EIF2AK3/PERK protein kinase occurs in response to the unfolded protein response. Phosphorylation at Ser-52 by EIF2AK1/HRI in response to mitochondrial damage promotes relocalization to the mitochondrial surface. In terms of processing, (Microbial infection) Phosphorylation by vaccinia virus protein E3 and rotavirus A stabilizes the eIF-2/GDP/eIF2B complex and prevents GDP/GTP exchange reaction, thus impairing the recycling of eIF-2 between successive rounds of initiation and leading to global inhibition of translation.

Its subcellular location is the cytoplasm. It is found in the stress granule. The protein localises to the cytosol. It localises to the mitochondrion. Activity is regulated by phosphorylation at Ser-49 and Ser-52, which stabilizes the eIF2/GDP/eIF2B complex and prevents the eIF2B-mediated exchange of GDP for GTP, thereby preventing the formation of the 43S pre-initiation complex (43S PIC). This results in the global attenuation of 5' cap-dependent protein synthesis and concomitant translation of ISR-specific mRNAs that contain a short upstream open reading frame (uORF) in their 5' UTR, such as ATF4, ATF5, DDIT3/CHOP and PPP1R15A/GADD34. Functionally, member of the eIF2 complex that functions in the early steps of protein synthesis by forming a ternary complex with GTP and initiator tRNA. This complex binds to a 40S ribosomal subunit, followed by mRNA binding to form a 43S pre-initiation complex (43S PIC). Junction of the 60S ribosomal subunit to form the 80S initiation complex is preceded by hydrolysis of the GTP bound to eIF2 and release of an eIF2-GDP binary complex. In order for eIF2 to recycle and catalyze another round of initiation, the GDP bound to eIF2 must exchange with GTP by way of a reaction catalyzed by eIF2B. EIF2S1/eIF2-alpha is a key component of the integrated stress response (ISR), required for adaptation to various stress: phosphorylation by metabolic-stress sensing protein kinases (EIF2AK1/HRI, EIF2AK2/PKR, EIF2AK3/PERK and EIF2AK4/GCN2) in response to stress converts EIF2S1/eIF2-alpha in a global protein synthesis inhibitor, leading to an attenuation of cap-dependent translation, while concomitantly initiating the preferential translation of ISR-specific mRNAs, such as the transcriptional activators ATF4 and QRICH1, and hence allowing ATF4- and QRICH1-mediated reprogramming. EIF2S1/eIF2-alpha also acts as an activator of mitophagy in response to mitochondrial damage: phosphorylation by EIF2AK1/HRI promotes relocalization to the mitochondrial surface, thereby triggering PRKN-independent mitophagy. The chain is Eukaryotic translation initiation factor 2 subunit 1 from Homo sapiens (Human).